A 144-amino-acid polypeptide reads, in one-letter code: Large ribosomal subunit protein uL11 (144 aa).

Belongs to the universal ribosomal protein uL11 family. As to quaternary structure, part of the ribosomal stalk of the 50S ribosomal subunit. Interacts with L10 and the large rRNA to form the base of the stalk. L10 forms an elongated spine to which L12 dimers bind in a sequential fashion forming a multimeric L10(L12)X complex. One or more lysine residues are methylated.

Its function is as follows. Forms part of the ribosomal stalk which helps the ribosome interact with GTP-bound translation factors. This is Large ribosomal subunit protein uL11 from Gluconobacter oxydans (strain 621H) (Gluconobacter suboxydans).